The primary structure comprises 564 residues: MTDTRTKRRMNWNSHHITQGDERAPNRAMLRAVGFEDGDFDKAIIGVAHAQSNITPCNNGLGELADHITGALREGGAMPQVYGTITVSDGISMGTEGMKCSLVSREVIADSIETVSRGQSHDGLIVVGGCDKNMPGAMIGIARLNIPAIFVYGGTIKPGHYQGKDLTIVSVFEAVGAYGAGKMSREDFEQIEKRACPGNGSCGGMYTANTMSSAFEAMGMSLPYSSTMSAVDAEKAVSAADSARALIRLIEQDIRPLDILTKKAFENAITVVMAVGGSTNAVLHLMAIAHACGVDLTLEDFERIRERTPVFCDLKPSGKYVATDLHEVGGIPRVMKMLLKAGLLHGDCLTVTGQTVAENLADVPDQPDPGQDVILPFDQPLYSQGHLAILRGNLAPEGSVAKISGLRQIKITGPARVFDSEEECMAAIMGDQIKAGDVIVIRYEGPKGGPGMREMLSPTSAIIGKGLGDSVGLITDGRFSGGTYGLVVGHVAPEAYVGGPIALVQEGDIIELNAETCELTLHVDDAELERRRAAWVAPEPRYRRGVLAKYARLVGSAARGAVTD.

The segment covering 1 to 10 has biased composition (basic residues); sequence MTDTRTKRRM. The interval 1-23 is disordered; the sequence is MTDTRTKRRMNWNSHHITQGDER. Position 57 (Cys-57) interacts with [2Fe-2S] cluster. Residue Asp-89 coordinates Mg(2+). A [2Fe-2S] cluster-binding site is contributed by Cys-130. The Mg(2+) site is built by Asp-131 and Lys-132. Position 132 is an N6-carboxylysine (Lys-132). Residue Cys-202 coordinates [2Fe-2S] cluster. Glu-454 is a Mg(2+) binding site. The active-site Proton acceptor is the Ser-480.

This sequence belongs to the IlvD/Edd family. As to quaternary structure, homodimer. [2Fe-2S] cluster is required as a cofactor. Requires Mg(2+) as cofactor.

The catalysed reaction is (2R)-2,3-dihydroxy-3-methylbutanoate = 3-methyl-2-oxobutanoate + H2O. The enzyme catalyses (2R,3R)-2,3-dihydroxy-3-methylpentanoate = (S)-3-methyl-2-oxopentanoate + H2O. It functions in the pathway amino-acid biosynthesis; L-isoleucine biosynthesis; L-isoleucine from 2-oxobutanoate: step 3/4. The protein operates within amino-acid biosynthesis; L-valine biosynthesis; L-valine from pyruvate: step 3/4. Functions in the biosynthesis of branched-chain amino acids. Catalyzes the dehydration of (2R,3R)-2,3-dihydroxy-3-methylpentanoate (2,3-dihydroxy-3-methylvalerate) into 2-oxo-3-methylpentanoate (2-oxo-3-methylvalerate) and of (2R)-2,3-dihydroxy-3-methylbutanoate (2,3-dihydroxyisovalerate) into 2-oxo-3-methylbutanoate (2-oxoisovalerate), the penultimate precursor to L-isoleucine and L-valine, respectively. The sequence is that of Dihydroxy-acid dehydratase from Deinococcus geothermalis (strain DSM 11300 / CIP 105573 / AG-3a).